A 1070-amino-acid chain; its full sequence is Protocadherin-8 (1070 aa).

The first 29 residues, 1-29 (MSPAKRWGSPCLFPLQLFSLCWVLSVAQS), serve as a signal peptide directing secretion. 6 consecutive Cadherin domains span residues 30 to 135 (KTVR…APRF), 136 to 245 (PRAQ…SPAF), 247 to 354 (QGAV…APEI), 393 to 497 (QEAG…APIF), 498 to 609 (TKPV…SPIL), and 615 to 721 (ANGS…VPAS). Topologically, residues 30–747 (KTVRYSTFEE…SGPSLQWDTP (718 aa)) are extracellular. Residue Asn616 is glycosylated (N-linked (GlcNAc...) asparagine). The segment covering 716-725 (SAVPASSGSP) has biased composition (low complexity). The interval 716-740 (SAVPASSGSPEHSRPPGSRLAPSGP) is disordered. The chain crosses the membrane as a helical span at residues 748–768 (LIVIIVLAGSCTLLLAAIIAI). Residues 769-1070 (ATTCNRRKKE…SPKKGINENV (302 aa)) are Cytoplasmic-facing. Disordered regions lie at residues 777 to 859 (KEVR…TGES), 906 to 928 (REAEKFSGKDSGKGDSDFNDSDS), and 1046 to 1070 (IGVPLYESPPGSRYVSPKKGINENV). Composition is skewed to basic and acidic residues over residues 780–790 (RKGGALREERP) and 906–921 (REAEKFSGKDSGKGDS). Position 1053 is a phosphoserine (Ser1053).

In terms of assembly, the N-terminal extracellular domain forms homophilic interactions; these interactions activate p38 MAPK via TAOK2 and trigger endocytosis. Interacts with CDH2; this interaction may lead to CDH2 cointernalization. Interacts with CDH11. Interacts with TAOK2.

It is found in the cell membrane. The protein resides in the cell projection. The protein localises to the dendrite. It localises to the presynaptic cell membrane. Its subcellular location is the postsynaptic cell membrane. Its function is as follows. Calcium-dependent cell-adhesion protein. May play a role in activity-induced synaptic reorganization underlying long term memory. Could be involved in CDH2 internalization through TAOK2/p38 MAPK pathway. In hippocampal neurons, may play a role in the down-regulation of dendritic spines, maybe through its action on CDH2 endocytosis. This is Protocadherin-8 (Pcdh8) from Mus musculus (Mouse).